A 306-amino-acid chain; its full sequence is Nucleotide-binding protein RSal33209_2275 (306 aa).

29–36 contributes to the ATP binding site; the sequence is GMSGAGRS. 80 to 83 contributes to the GTP binding site; sequence DVRG.

Belongs to the RapZ-like family.

In terms of biological role, displays ATPase and GTPase activities. The protein is Nucleotide-binding protein RSal33209_2275 of Renibacterium salmoninarum (strain ATCC 33209 / DSM 20767 / JCM 11484 / NBRC 15589 / NCIMB 2235).